The primary structure comprises 735 residues: F-box and leucine-rich repeat protein 13 (735 aa).

One can recognise an F-box domain in the interval 152–198 (KCDISLLPERAILQIFFYLSLKDVIICGQVNHAWMLMTQLNSLWNAI). LRR repeat units follow at residues 230–254 (GCLL…NVSD), 255–280 (CPTF…NLSN), 281–305 (TTIT…SLAY), 306–333 (CRRF…DLSG), 334–359 (CTQI…TIND), 360–385 (MPTL…VFTG), 386–406 (APHI…RKIR), 410–435 (NKRV…YMAD), 436–460 (CKGI…NLAN), 461–488 (CVRI…NLSN), 489–514 (CVRL…SLRN), 515–538 (CEHL…IDLS), 539–563 (GTDI…SVSE), 564–589 (CYRI…DVSY), 590–615 (CSQL…SIAG), 616–641 (CPKI…DISG), and 642–667 (CVLL…KMQY). Positions 682–692 (KVQQQEYNTND) are enriched in polar residues. The segment at 682–703 (KVQQQEYNTNDPPRWFGYDREG) is disordered.

The protein belongs to the DRC6 family. As to quaternary structure, component of the nexin-dynein regulatory complex (N-DRC). Directly interacts with SKP1 and CUL1. Interacts with TCTE1/DRC5.

It localises to the cytoplasm. The protein localises to the cytoskeleton. It is found in the flagellum axoneme. Its subcellular location is the microtubule organizing center. The protein resides in the centrosome. Substrate-recognition component of the SCF (SKP1-CUL1-F-box protein)-type E3 ubiquitin ligase complex. Component of the nexin-dynein regulatory complex (N-DRC), a key regulator of ciliary/flagellar motility which maintains the alignment and integrity of the distal axoneme and regulates microtubule sliding in motile axonemes. Specifically targets CEP192 isoform 3 for ubiquitin-mediated proteolysis and thereby acts as a regulator of microtubule nucleation activity. This Homo sapiens (Human) protein is F-box and leucine-rich repeat protein 13 (FBXL13).